The primary structure comprises 83 residues: UPF0297 protein LEUM_0557 (83 aa).

The protein belongs to the UPF0297 family.

This chain is UPF0297 protein LEUM_0557, found in Leuconostoc mesenteroides subsp. mesenteroides (strain ATCC 8293 / DSM 20343 / BCRC 11652 / CCM 1803 / JCM 6124 / NCDO 523 / NBRC 100496 / NCIMB 8023 / NCTC 12954 / NRRL B-1118 / 37Y).